Consider the following 401-residue polypeptide: Acetate kinase (401 aa).

N9 serves as a coordination point for Mg(2+). K16 contacts ATP. Substrate is bound at residue R88. Residue D147 is the Proton donor/acceptor of the active site. Residues 207-211 (HLGNG), 282-284 (DCR), and 333-337 (GIGEN) each bind ATP. E388 provides a ligand contact to Mg(2+).

The protein belongs to the acetokinase family. As to quaternary structure, homodimer. Requires Mg(2+) as cofactor. It depends on Mn(2+) as a cofactor.

Its subcellular location is the cytoplasm. The catalysed reaction is acetate + ATP = acetyl phosphate + ADP. It participates in metabolic intermediate biosynthesis; acetyl-CoA biosynthesis; acetyl-CoA from acetate: step 1/2. In terms of biological role, catalyzes the formation of acetyl phosphate from acetate and ATP. Can also catalyze the reverse reaction. The chain is Acetate kinase from Haemophilus influenzae (strain 86-028NP).